A 148-amino-acid chain; its full sequence is uncharacterized protein (148 aa).

This sequence to A.tumefaciens Atu0565/AGR_C_992.

This is an uncharacterized protein from Rhizobium meliloti (strain 1021) (Ensifer meliloti).